We begin with the raw amino-acid sequence, 442 residues long: ORC1-type DNA replication protein 8 (442 aa).

Residues 66–70 (VGKTA) and Y218 each bind ATP.

The protein belongs to the CDC6/cdc18 family.

Its function is as follows. Involved in regulation of DNA replication. In Haloarcula marismortui (strain ATCC 43049 / DSM 3752 / JCM 8966 / VKM B-1809) (Halobacterium marismortui), this protein is ORC1-type DNA replication protein 8 (cdc6h).